Here is an 86-residue protein sequence, read N- to C-terminus: Small ribosomal subunit protein bS20 (86 aa).

It belongs to the bacterial ribosomal protein bS20 family.

Binds directly to 16S ribosomal RNA. In Oceanobacillus iheyensis (strain DSM 14371 / CIP 107618 / JCM 11309 / KCTC 3954 / HTE831), this protein is Small ribosomal subunit protein bS20.